We begin with the raw amino-acid sequence, 257 residues long: MRKQVALVTGAAGGIGFEIAREFAREGASVIVSDLRPEACEKAASKLAEEGFDAAAIPYDVTKEAQVADTVNVIQKQYGRLDILVNNAGIQHVAPIEEFPTDTFEQLIKVMLTAPFIAMKHVFPIMKKQQFGRIINIASVNGLVGFAGKSAYNSAKHGVIGLTKVGALEGAPHGITVNALCPGYVDTQLVRNQLSDLSKTRNVPYDSVLEQVIFPLVPQKRLLSVKEIADYAVFLASEKAKGVTGQAVVLDGGYTAQ.

The NAD(+) site is built by aspartate 34, aspartate 60, valine 61, asparagine 87, tyrosine 152, and lysine 156. Tyrosine 152 acts as the Proton acceptor in catalysis.

It belongs to the short-chain dehydrogenases/reductases (SDR) family.

This is an uncharacterized protein from Bacillus subtilis (strain 168).